A 604-amino-acid chain; its full sequence is NADP-dependent malic enzyme, mitochondrial (604 aa).

The disordered stretch occupies residues 29–50 (APAQGCHSKPGPARPVPLKKRG). The Proton donor role is filled by Tyr137. Arg190 serves as a coordination point for NAD(+). The Proton acceptor role is filled by Lys208. A divalent metal cation-binding residues include Glu280, Asp281, and Asp304. NAD(+) is bound at residue Asp304. Ser371 is subject to Phosphoserine. Asn443 provides a ligand contact to NAD(+).

The protein belongs to the malic enzymes family. Mg(2+) is required as a cofactor. The cofactor is Mn(2+). In terms of tissue distribution, expressed predominantly in organs with a low-division rate.

The protein resides in the mitochondrion matrix. It carries out the reaction (S)-malate + NADP(+) = pyruvate + CO2 + NADPH. The enzyme catalyses oxaloacetate + H(+) = pyruvate + CO2. In terms of biological role, catalyzes the oxidative decarboxylation of (S)-malate to pyruvate using NADP(+) as a cofactor. Can also reverse the decarboxylation reaction, but only with significantly lower efficiency. The sequence is that of NADP-dependent malic enzyme, mitochondrial from Homo sapiens (Human).